The primary structure comprises 144 residues: MAFYESIYILRADLTTEQVELVNKRFSDNVAATGGKVVRTELWGRRQLAYLVKKNVKGFYVFHILEGEGSMVHDLEAKLGIDEDVLKFQHVRIEDVSDKASPLAPCEEKGEEGKAEDAADELTTFGMADDDDLGDDDDTVEAGI.

A disordered region spans residues 99 to 144; the sequence is KASPLAPCEEKGEEGKAEDAADELTTFGMADDDDLGDDDDTVEAGI. The segment covering 106–117 has biased composition (basic and acidic residues); it reads CEEKGEEGKAED. The span at 128-144 shows a compositional bias: acidic residues; that stretch reads ADDDDLGDDDDTVEAGI.

The protein belongs to the bacterial ribosomal protein bS6 family.

In terms of biological role, binds together with bS18 to 16S ribosomal RNA. The sequence is that of Small ribosomal subunit protein bS6 from Magnetococcus marinus (strain ATCC BAA-1437 / JCM 17883 / MC-1).